The following is a 395-amino-acid chain: Chalcone synthase 3 (395 aa).

Residue Val2 is modified to N-acetylvaline. The active site involves Cys169.

The protein belongs to the thiolase-like superfamily. Chalcone/stilbene synthases family.

It carries out the reaction (E)-4-coumaroyl-CoA + 3 malonyl-CoA + 3 H(+) = 2',4,4',6'-tetrahydroxychalcone + 3 CO2 + 4 CoA. It participates in secondary metabolite biosynthesis; flavonoid biosynthesis. Its function is as follows. The primary product of this enzyme is 4,2',4',6'-tetrahydroxychalcone (also termed naringenin-chalcone or chalcone) which can under specific conditions spontaneously isomerize into naringenin. This chain is Chalcone synthase 3 (CHS3), found in Sinapis alba (White mustard).